Reading from the N-terminus, the 476-residue chain is 3-isopropylmalate dehydratase large subunit (476 aa).

Residues cysteine 353, cysteine 413, and cysteine 416 each contribute to the [4Fe-4S] cluster site.

The protein belongs to the aconitase/IPM isomerase family. LeuC type 1 subfamily. In terms of assembly, heterodimer of LeuC and LeuD. The cofactor is [4Fe-4S] cluster.

It carries out the reaction (2R,3S)-3-isopropylmalate = (2S)-2-isopropylmalate. It functions in the pathway amino-acid biosynthesis; L-leucine biosynthesis; L-leucine from 3-methyl-2-oxobutanoate: step 2/4. In terms of biological role, catalyzes the isomerization between 2-isopropylmalate and 3-isopropylmalate, via the formation of 2-isopropylmaleate. The polypeptide is 3-isopropylmalate dehydratase large subunit (Yersinia pseudotuberculosis serotype IB (strain PB1/+)).